The chain runs to 737 residues: DNA polymerase iota (737 aa).

Residues 17-231 (IIHLDMDYFY…GDLKRVTGIG (215 aa)) enclose the UmuC domain. Position 21 (D21) interacts with Mg(2+). Y26 and R58 together coordinate a 2'-deoxyribonucleoside 5'-triphosphate. D113 is a binding site for Mg(2+). The active site involves E114. DNA-binding stretches follow at residues 212–277 (TYAE…FGRD) and 288–413 (KTIG…SKFQ). Disordered regions lie at residues 443–464 (TSLTSPTAESPTSDECAFRSSP), 482–515 (SPVPMLLDNGSESAATNSDFSDFSETEVEPSPKK), 557–581 (DSEKDFPMSTTPSTSTSAPAPRFRT), and 607–643 (LSSNASSTASSPLPSPMDDSIAMSAPSTTTLPFPSPT). The segment covering 491-502 (GSESAATNSDFS) has biased composition (polar residues). Low complexity-rich tracts occupy residues 563–577 (PMSTTPSTSTSAPAP), 607–618 (LSSNASSTASSP), and 632–643 (PSTTTLPFPSPT). The Ubiquitin-binding (UBM) signature appears at 669–686 (VDAEVFKELPVELQTELI).

The protein belongs to the DNA polymerase type-Y family. The cofactor is Mg(2+). Mn(2+) is required as a cofactor.

Its subcellular location is the nucleus. The enzyme catalyses DNA(n) + a 2'-deoxyribonucleoside 5'-triphosphate = DNA(n+1) + diphosphate. Its function is as follows. Error-prone DNA polymerase specifically involved in DNA repair. Plays an important role in translesion synthesis, where the normal high-fidelity DNA polymerases cannot proceed and DNA synthesis stalls. Favors Hoogsteen base-pairing in the active site. Inserts the correct base with higher fidelity opposite an adenosine template. Exhibits low fidelity and efficiency opposite a thymidine template, where it will preferentially insert guanosine. Forms a Schiff base with 5'-deoxyribose phosphate at abasic sites, but may not have lyase activity. In Drosophila melanogaster (Fruit fly), this protein is DNA polymerase iota.